A 120-amino-acid chain; its full sequence is C-C motif chemokine 23 (120 aa).

Residues 1–21 (MKVSVAALSCLMLVTALGSQA) form the signal peptide. Intrachain disulfides connect Cys54/Cys78, Cys55/Cys94, and Cys65/Cys105.

This sequence belongs to the intercrine beta (chemokine CC) family.

Its subcellular location is the secreted. Shows chemotactic activity for monocytes, resting T-lymphocytes, and neutrophils, but not for activated lymphocytes. Inhibits proliferation of myeloid progenitor cells in colony formation assays. This protein can bind heparin. Binds CCR1. In Macaca mulatta (Rhesus macaque), this protein is C-C motif chemokine 23 (CCL23).